Consider the following 318-residue polypeptide: Biotin synthase (318 aa).

In terms of domain architecture, Radical SAM core spans 46-272; it reads DGVDVEQLNN…RSVVKISGGR (227 aa). The [4Fe-4S] cluster site is built by Cys-61, Cys-65, and Cys-68. [2Fe-2S] cluster is bound by residues Cys-105, Cys-138, Cys-197, and Lys-267.

It belongs to the radical SAM superfamily. Biotin synthase family. Homodimer. The cofactor is [4Fe-4S] cluster. Requires [2Fe-2S] cluster as cofactor.

The catalysed reaction is (4R,5S)-dethiobiotin + (sulfur carrier)-SH + 2 reduced [2Fe-2S]-[ferredoxin] + 2 S-adenosyl-L-methionine = (sulfur carrier)-H + biotin + 2 5'-deoxyadenosine + 2 L-methionine + 2 oxidized [2Fe-2S]-[ferredoxin]. The protein operates within cofactor biosynthesis; biotin biosynthesis; biotin from 7,8-diaminononanoate: step 2/2. Functionally, catalyzes the conversion of dethiobiotin (DTB) to biotin by the insertion of a sulfur atom into dethiobiotin via a radical-based mechanism. This chain is Biotin synthase, found in Cenarchaeum symbiosum (strain A).